Here is a 198-residue protein sequence, read N- to C-terminus: MEHYISLFVKSVFIENMALSFFLGMCTFLAVSKKVSTAFGLGIAVIVVLGISVPVNQLVYTHILKDGALIEGVDLSFLNFITFIGVIAALVQILEMFLDKFVPSLYEALGIFLPLITVNCAIFGGVSFMVQREYNFPESVVYGIGAGTGWMLAIVALAGLTEKMKYADVPAGLRGLGITFITVGLMALGFMSFSGIQL.

6 consecutive transmembrane segments (helical) span residues 11 to 31, 35 to 55, 77 to 97, 110 to 130, 140 to 160, and 176 to 196; these read SVFIENMALSFFLGMCTFLAV, VSTAFGLGIAVIVVLGISVPV, FLNFITFIGVIAALVQILEMF, GIFLPLITVNCAIFGGVSFMV, VVYGIGAGTGWMLAIVALAGL, and LGITFITVGLMALGFMSFSGI.

It belongs to the NqrDE/RnfAE family. Composed of six subunits; NqrA, NqrB, NqrC, NqrD, NqrE and NqrF.

The protein localises to the cell inner membrane. It carries out the reaction a ubiquinone + n Na(+)(in) + NADH + H(+) = a ubiquinol + n Na(+)(out) + NAD(+). In terms of biological role, NQR complex catalyzes the reduction of ubiquinone-1 to ubiquinol by two successive reactions, coupled with the transport of Na(+) ions from the cytoplasm to the periplasm. NqrA to NqrE are probably involved in the second step, the conversion of ubisemiquinone to ubiquinol. The sequence is that of Na(+)-translocating NADH-quinone reductase subunit E from Mannheimia succiniciproducens (strain KCTC 0769BP / MBEL55E).